The primary structure comprises 2514 residues: Highly reducing polyketide synthase sphB (2514 aa).

Positions glutamine 66–serine 486 constitute a Ketosynthase family 3 (KS3) domain. Catalysis depends on for beta-ketoacyl synthase activity residues cysteine 238, histidine 374, and histidine 409. Positions methionine 580 to valine 904 constitute a Malonyl-CoA:ACP transacylase (MAT) domain. Residues histidine 950–proline 1079 form an N-terminal hotdog fold region. The region spanning histidine 950–alanine 1240 is the PKS/mFAS DH domain. Histidine 982 functions as the Proton acceptor; for dehydratase activity in the catalytic mechanism. The segment at proline 1089–alanine 1240 is C-terminal hotdog fold. Aspartate 1150 functions as the Proton donor; for dehydratase activity in the catalytic mechanism. Positions tryptophan 1319–valine 1578 are methyltransferase (CMet) domain. In terms of domain architecture, Enoyl reductase (ER) spans glycine 1779 to valine 2092. One can recognise a Ketoreductase (KR) domain in the interval alanine 2120–glutamate 2297. The 78-residue stretch at glutamate 2427 to valine 2504 folds into the Carrier domain. Residue serine 2464 is modified to O-(pantetheine 4'-phosphoryl)serine.

Pantetheine 4'-phosphate is required as a cofactor.

It carries out the reaction holo-[ACP] + 8 malonyl-CoA + acetyl-CoA + 5 AH2 + 8 NADPH + 16 H(+) = (3R)-hydroxyoctadeca-4,10-dienoyl-[ACP] + 5 A + 8 CO2 + 8 NADP(+) + 9 CoA + 7 H2O. Its pathway is secondary metabolite biosynthesis. Functionally, highly reducing polyketide synthase; part of the gene cluster that mediates the biosynthesis of sphingofungins, bioactive molecules acting as sphingolipid inhibitors via inhibiting serine palmitoyl transferase (SPT). Within the pathway, sphB catalyzes the first step of sphingofungin biosynthesis by condensing 8 units of malonyl-CoA with one starter unit of acetyl-CoA, leading to an C18 polyketide precursor 3-hydroxyoctadeca-4,10-dienoyl-ACP containing one delta-6 desaturation and one delta-12 desaturation. The PKS sphB does not contain any putative thioesterase domain for releasing the nascent polyketide chain and it has been suggested that aminoacyl transferases can facilitate the polyketide chain release. The aminoacyl transferase sphA uses the sphB product to produce 3-keto-presphingofungin by adding an aminomalonate molecule. SphF then reduces the C-3 ketone of 3-keto-presphingofungin which leads to presphingofungin. The cytochrome P450 monooxygenase sphH converts presphingofungin into sphingofungin B1 which is further converted to sphingofungin B by the dioxygenase sphC. SphC is also able to convert presphingofungin into sphingofungin B2. The acetyltransferase sphE acetylates sphingofungin B to produce sphingofungin C, but can also convert sphingofungin B1 into sphingofungin C1 and sphingofungin B2 into sphingofungin C2. Finally, sphingofungin C can be spontaneously converted into sphingofungin D. The chain is Highly reducing polyketide synthase sphB from Aspergillus fumigatus (strain CBS 144.89 / FGSC A1163 / CEA10) (Neosartorya fumigata).